The primary structure comprises 226 residues: V-type proton ATPase subunit E 2 (226 aa).

The protein belongs to the V-ATPase E subunit family. As to quaternary structure, V-ATPase is a heteromultimeric enzyme made up of two complexes: the ATP-hydrolytic V1 complex and the proton translocation V0 complex. The V1 complex consists of three catalytic AB heterodimers that form a heterohexamer, three peripheral stalks each consisting of EG heterodimers, one central rotor including subunits D and F, and the regulatory subunits C and H. The proton translocation complex V0 consists of the proton transport subunit a, a ring of proteolipid subunits c9c'', rotary subunit d, subunits e and f, and the accessory subunits ATP6AP1/Ac45 and ATP6AP2/PRR.

Functionally, subunit of the V1 complex of vacuolar(H+)-ATPase (V-ATPase), a multisubunit enzyme composed of a peripheral complex (V1) that hydrolyzes ATP and a membrane integral complex (V0) that translocates protons. V-ATPase is responsible for acidifying and maintaining the pH of intracellular compartments and in some cell types, is targeted to the plasma membrane, where it is responsible for acidifying the extracellular environment. The protein is V-type proton ATPase subunit E 2 (ATP6V1E2) of Bos taurus (Bovine).